A 902-amino-acid polypeptide reads, in one-letter code: 26S proteasome regulatory subunit rpn-1 (902 aa).

The segment covering 1 to 41 has biased composition (basic and acidic residues); sequence MAQESDLSKTADKGKGKAVDDEKKHQDVDGKTPANGKKEEE. The segment at 1–54 is disordered; the sequence is MAQESDLSKTADKGKGKAVDDEKKHQDVDGKTPANGKKEEEQNASEELSEEDQQ. The segment covering 42 to 52 has biased composition (acidic residues); that stretch reads QNASEELSEED. PC repeat units follow at residues 415-448, 449-487, 488-522, 525-559, 568-601, 645-680, 681-715, and 716-750; these read STVA…QIQA, GAYL…LIRV, ATIM…SMQV, MAAL…GSRL, ALGL…KPTA, AVLG…NIRR, AVPL…EVAI, and NAIF…DQES.

This sequence belongs to the proteasome subunit S2 family.

Acts as a regulatory subunit of the 26 proteasome which is involved in the ATP-dependent degradation of ubiquitinated proteins. The chain is 26S proteasome regulatory subunit rpn-1 (rpn-1) from Neurospora crassa (strain ATCC 24698 / 74-OR23-1A / CBS 708.71 / DSM 1257 / FGSC 987).